A 105-amino-acid polypeptide reads, in one-letter code: Prokineticin-1 (105 aa).

The signal sequence occupies residues 1–19 (MRGAVHIFIMLLLATASDC). 5 disulfides stabilise this stretch: C26-C38, C32-C50, C37-C78, C60-C86, and C80-C96.

This sequence belongs to the AVIT (prokineticin) family. Highly expressed in liver and ovary and weakly expressed in testis and placenta. Expressed in mucosa and mesenchyme of embryonic gut during enteric nervous system development (at protein level). Predominantly expressed in kidney and liver. Also expressed in lung, ovary, placenta and testis. In fetal liver, is restricted to and highly expressed in hepatocytes. In adult kidney, expression is restricted to the endothelial tubule cells. In placenta, expressed throughout gestation.

The protein resides in the secreted. Functionally, potently contracts gastrointestinal (GI) smooth muscle. Induces proliferation, migration and fenestration (the formation of membrane discontinuities) in capillary endothelial cells. Induces proliferation and differentiation, but not migration, of enteric neural crest cells. Directly influences neuroblastoma progression by promoting the proliferation and migration of neuroblastoma cells. Positively regulates PTGS2 expression and prostaglandin synthesis. May play a role in placentation. May play a role in normal and pathological testis angiogenesis. The polypeptide is Prokineticin-1 (Mus musculus (Mouse)).